The following is a 42-amino-acid chain: Delta-actitoxin-Ael2d (42 aa).

Intrachain disulfides connect Cys4/Cys37, Cys6/Cys30, and Cys20/Cys38.

Belongs to the sea anemone type 3 (BDS) potassium channel toxin family.

The protein resides in the secreted. It is found in the nematocyst. Binds to voltage-gated sodium channels (Nav), and slows down the inactivation of mammalian Nav1.2/SCN2A, Nav1.3/SCN3A Nav1.4/SCN4A, Nav1.6/SCN8A, insect DmNav1 and BgNav1 channels, and arachnid VdNav1 channel. This toxin acts by binding to site 3 of sodium channels. This Anthopleura elegantissima (Green aggregating anemone) protein is Delta-actitoxin-Ael2d.